We begin with the raw amino-acid sequence, 417 residues long: Actin-related protein 10 (417 aa).

This sequence belongs to the actin family. In terms of assembly, subunit of dynactin, a multiprotein complex part of a tripartite complex with dynein and a adapter, such as BICDL1, BICD2 or HOOK3. The dynactin complex is built around ACTR1A/ACTB filament and consists of an actin-related filament composed of a shoulder domain, a pointed end and a barbed end. Its length is defined by its flexible shoulder domain. The soulder is composed of 2 DCTN1 subunits, 4 DCTN2 and 2 DCTN3. The 4 DCNT2 (via N-terminus) bind the ACTR1A filament and act as molecular rulers to determine the length. The pointed end is important for binding dynein-dynactin cargo adapters. Consists of 4 subunits: ACTR10, DCNT4, DCTN5 and DCTN6. The barbed end is composed of a CAPZA1:CAPZB heterodimers, which binds ACTR1A/ACTB filament and dynactin and stabilizes dynactin.

The protein localises to the cytoplasm. It localises to the cytoskeleton. In terms of biological role, part of the dynactin complex that activates the molecular motor dynein for ultra-processive transport along microtubules. This is Actin-related protein 10 (ACTR10) from Homo sapiens (Human).